A 294-amino-acid chain; its full sequence is Protein CHLOROPLAST J-LIKE DOMAIN 1, chloroplastic (294 aa).

A chloroplast-targeting transit peptide spans 1–58 (MAPALSTSCSSVMAFSTSNALRYHHPQISLRNSLRAPKSPSFVRLPLGKVLQSRIVIR). The Stromal segment spans residues 59 to 164 (AASSAAGNPQ…GPRFSRSSKN (106 aa)). Residues 74 to 152 (NPYEVLGVNP…IKYADKQPII (79 aa)) form a J-like domain region. A helical transmembrane segment spans residues 165-182 (DMLINLAISVVFSAWIAI). Topologically, residues 183 to 233 (KRNVEYKPLQFMSFVFVYRIFEKLKSFEAPSSPIYNEEGEESGRGLRMGKR) are chloroplast intermembrane. Residues 234 to 256 (LLRSLSLVFGSILLASLAYTGFL) form a helical membrane-spanning segment. Topologically, residues 257-275 (NGIEYMGYSIPMVLYNNQE) are stromal. Residues 276–293 (LIVTASSAFMLYVIASFY) traverse the membrane as a helical segment. Residue arginine 294 is a topological domain, chloroplast intermembrane.

Interacts (via J-like domain) with ARC6 (via J domain).

It localises to the plastid. The protein localises to the chloroplast inner membrane. Its function is as follows. Probably involved in the regulation of the fatty acid metabolic process in chloroplasts, especially chloroplastic galactolipids monogalactosyldiacylglycerol (MGDG) and digalactosyldiacylglycerol (DGDG). The chain is Protein CHLOROPLAST J-LIKE DOMAIN 1, chloroplastic from Arabidopsis thaliana (Mouse-ear cress).